Here is a 372-residue protein sequence, read N- to C-terminus: MAHAPASCPSSRNSGDGDKGKPRKVALITGITGQDGSYLAEFLLEKGYEVHGIVRRSSSFNTGRIEHLYKNPQAHIEGNMKLHYGDLTDSTCLVKIINEVKPTEIYNLGAQSHVKISFDLAEYTADVDGVGTLRLLDAIKTCGLINSVKFYQASTSELYGKVQEIPQKETTPFYPRSPYGAAKLYAYWIVVNFREAYNLFAVNGILFNHESPRRGANFVTRKISRSVAKIYLGQLECFSLGNLDAKRDWGHAKDYVEAMWLMLQNDEPEDFVIATGEVHSVREFVEKSFMHIGKTIVWEGKNENEVGRCKETGKIHVTVDLKYYRPTEVDFLQGDCSKAQQKLNWKPRVAFDELVREMVQADVELMRTNPNA.

The interval 1–22 (MAHAPASCPSSRNSGDGDKGKP) is disordered. At alanine 2 the chain carries N-acetylalanine. Residues 30-35 (GITGQD), 55-58 (RRSS), 86-87 (DL), 108-112 (LGAQS), and tyrosine 123 each bind NADP(+). The active site involves threonine 155. Active-site nucleophile residues include glutamate 157 and tyrosine 179. NADP(+) is bound by residues lysine 183, histidine 209, and arginine 214. Tyrosine 323 bears the Phosphotyrosine mark.

It belongs to the NAD(P)-dependent epimerase/dehydratase family. GDP-mannose 4,6-dehydratase subfamily. It depends on NADP(+) as a cofactor.

The enzyme catalyses GDP-alpha-D-mannose = GDP-4-dehydro-alpha-D-rhamnose + H2O. It participates in nucleotide-sugar biosynthesis; GDP-L-fucose biosynthesis via de novo pathway; GDP-L-fucose from GDP-alpha-D-mannose: step 1/2. With respect to regulation, inhibited by GDP-fucose. Catalyzes the conversion of GDP-D-mannose to GDP-4-dehydro-6-deoxy-D-mannose. In Cricetulus griseus (Chinese hamster), this protein is GDP-mannose 4,6 dehydratase (GMDS).